Reading from the N-terminus, the 2173-residue chain is Mediator of RNA polymerase II transcription subunit 12 (2173 aa).

8 disordered regions span residues 1–34 (MAAFGVLSYEHRPLKRPRLGPPDVYPQDPKQKED), 318–345 (GGHQAHGISAQQGNALPPTPTSQPAGGN), 630–718 (ASNS…KGMD), 784–804 (KSTAETGGEEGQKRKRSKPEA), 1380–1404 (MNSSNPSWNGSAVSGSSVSNSNSAS), 1443–1467 (ELEKGQHLGPSSRKERDRQKQKSMS), 1737–1780 (EEEP…VKQE), and 2020–2068 (QGIH…FRPQ). Over residues 702-717 (QAQEQESKSTAKDKGM) the composition is skewed to basic and acidic residues. A compositionally biased stretch (low complexity) spans 1389 to 1404 (GSAVSGSSVSNSNSAS). Composition is skewed to basic and acidic residues over residues 1443–1462 (ELEKGQHLGPSSRKERDRQK) and 1747–1759 (EPDKKLDTAKVEK). Residues 2034–2057 (QQQQQQQQQQQQQQQQQQVHQQQQ) show a composition bias toward low complexity.

The protein belongs to the Mediator complex subunit 12 family. Component of the Mediator complex.

It is found in the nucleus. In terms of biological role, component of the Mediator complex, a coactivator involved in regulated gene transcription of nearly all RNA polymerase II-dependent genes. Mediator functions as a bridge to convey information from gene-specific regulatory proteins to the basal RNA polymerase II transcription machinery. Mediator is recruited to promoters by direct interactions with regulatory proteins and serves as a scaffold for the assembly of a functional preinitiation complex with RNA polymerase II and the general transcription factors. Required for development of the body axis, brain, ear, kidney, forelimb and neural crest and for pigmentation. Acts as a coactivator for sox9a and/or sox9b promoting the expression of several neuronal determination genes. The polypeptide is Mediator of RNA polymerase II transcription subunit 12 (med12) (Danio rerio (Zebrafish)).